We begin with the raw amino-acid sequence, 30 residues long: DCLPDWFHYEGHCYRVFDEPKKWADAEKFC.

The C-type lectin domain maps to 1 to 30 (DCLPDWFHYEGHCYRVFDEPKKWADAEKFC). An intrachain disulfide couples Cys-2 to Cys-13.

Belongs to the snaclec family. As to quaternary structure, heterodimer of a metalloproteinase subunit and a regulatory subunit comprising two polypeptides disulfide-linked (14 kDa and 17 kDa chains). In terms of tissue distribution, expressed by the venom gland.

Its subcellular location is the secreted. In terms of biological role, calcium-dependent prothrombin activator. This protein may activate prothrombin via recognition by the regulatory subunit of the calcium ion bound conformation of its gamma-carboxyglutamic acid (GLA) domain, and the subsequent conversion of prothrombin to active thrombin is catalyzed by the catalytic subunit. In Echis carinatus (Saw-scaled viper), this protein is Snaclec carinactivase-1 regulatory subunit 14 kDa chain.